Consider the following 82-residue polypeptide: MKKDIHPAYRPVVFYDASAEFKILTRSTVETKETIQWEDGNEYPLVRIDVSSKSHPFYTGKQNIVDTAGRVDRFRRKYGKKN.

The protein belongs to the bacterial ribosomal protein bL31 family. Type B subfamily. As to quaternary structure, part of the 50S ribosomal subunit.

The protein is Large ribosomal subunit protein bL31B of Dichelobacter nodosus (strain VCS1703A).